A 376-amino-acid chain; its full sequence is Queuine tRNA-ribosyltransferase (376 aa).

Asp90 serves as the catalytic Proton acceptor. Substrate is bound by residues 90–94 (DSGGF), Asp144, Gln193, and Gly220. Residues 251–257 (GVGTPED) are RNA binding. The active-site Nucleophile is Asp270. The tract at residues 275–279 (TRNAR) is RNA binding; important for wobble base 34 recognition. Residues Cys308, Cys310, Cys313, and His339 each coordinate Zn(2+).

Belongs to the queuine tRNA-ribosyltransferase family. In terms of assembly, homodimer. Within each dimer, one monomer is responsible for RNA recognition and catalysis, while the other monomer binds to the replacement base PreQ1. The cofactor is Zn(2+).

The catalysed reaction is 7-aminomethyl-7-carbaguanine + guanosine(34) in tRNA = 7-aminomethyl-7-carbaguanosine(34) in tRNA + guanine. It functions in the pathway tRNA modification; tRNA-queuosine biosynthesis. Functionally, catalyzes the base-exchange of a guanine (G) residue with the queuine precursor 7-aminomethyl-7-deazaguanine (PreQ1) at position 34 (anticodon wobble position) in tRNAs with GU(N) anticodons (tRNA-Asp, -Asn, -His and -Tyr). Catalysis occurs through a double-displacement mechanism. The nucleophile active site attacks the C1' of nucleotide 34 to detach the guanine base from the RNA, forming a covalent enzyme-RNA intermediate. The proton acceptor active site deprotonates the incoming PreQ1, allowing a nucleophilic attack on the C1' of the ribose to form the product. After dissociation, two additional enzymatic reactions on the tRNA convert PreQ1 to queuine (Q), resulting in the hypermodified nucleoside queuosine (7-(((4,5-cis-dihydroxy-2-cyclopenten-1-yl)amino)methyl)-7-deazaguanosine). The sequence is that of Queuine tRNA-ribosyltransferase from Cupriavidus metallidurans (strain ATCC 43123 / DSM 2839 / NBRC 102507 / CH34) (Ralstonia metallidurans).